The chain runs to 599 residues: Elongation factor 4 (599 aa).

Residues 4–186 (KFIRNFSIIA…AIIKHVPPPL (183 aa)) enclose the tr-type G domain. Residues 16–21 (DHGKST) and 133–136 (NKID) each bind GTP.

Belongs to the TRAFAC class translation factor GTPase superfamily. Classic translation factor GTPase family. LepA subfamily.

The protein localises to the cell membrane. The catalysed reaction is GTP + H2O = GDP + phosphate + H(+). Required for accurate and efficient protein synthesis under certain stress conditions. May act as a fidelity factor of the translation reaction, by catalyzing a one-codon backward translocation of tRNAs on improperly translocated ribosomes. Back-translocation proceeds from a post-translocation (POST) complex to a pre-translocation (PRE) complex, thus giving elongation factor G a second chance to translocate the tRNAs correctly. Binds to ribosomes in a GTP-dependent manner. This is Elongation factor 4 from Ureaplasma urealyticum serovar 10 (strain ATCC 33699 / Western).